The chain runs to 518 residues: Probable glycosyltransferase At5g03795 (518 aa).

Over 1 to 25 (MGDEDVDGKCKNMSACSSTTSYSTK) the chain is Cytoplasmic. A helical; Signal-anchor for type II membrane protein membrane pass occupies residues 26–46 (LFLFMVPLVVISGFVFVNIGP). Topologically, residues 47–518 (KDSTSLLTSL…RRLNVKIREV (472 aa)) are lumenal. 5 N-linked (GlcNAc...) asparagine glycosylation sites follow: N104, N113, N120, N282, and N320.

This sequence belongs to the glycosyltransferase 47 family.

Its subcellular location is the golgi apparatus membrane. Its function is as follows. May be involved in cell wall biosynthesis. The sequence is that of Probable glycosyltransferase At5g03795 from Arabidopsis thaliana (Mouse-ear cress).